A 508-amino-acid chain; its full sequence is Photosystem II CP47 reaction center protein (508 aa).

The next 6 helical transmembrane spans lie at 21-36 (SVHI…WAGS), 101-115 (IVFS…IWHW), 140-156 (GIHL…FGAF), 203-218 (IAAG…FHLS), 237-252 (VLSS…AFVV), and 457-472 (SFAL…HGAR).

The protein belongs to the PsbB/PsbC family. PsbB subfamily. In terms of assembly, PSII is composed of 1 copy each of membrane proteins PsbA, PsbB, PsbC, PsbD, PsbE, PsbF, PsbH, PsbI, PsbJ, PsbK, PsbL, PsbM, PsbT, PsbX, PsbY, PsbZ, Psb30/Ycf12, at least 3 peripheral proteins of the oxygen-evolving complex and a large number of cofactors. It forms dimeric complexes. It depends on Binds multiple chlorophylls. PSII binds additional chlorophylls, carotenoids and specific lipids. as a cofactor.

The protein resides in the plastid. The protein localises to the chloroplast thylakoid membrane. One of the components of the core complex of photosystem II (PSII). It binds chlorophyll and helps catalyze the primary light-induced photochemical processes of PSII. PSII is a light-driven water:plastoquinone oxidoreductase, using light energy to abstract electrons from H(2)O, generating O(2) and a proton gradient subsequently used for ATP formation. This chain is Photosystem II CP47 reaction center protein, found in Aethionema grandiflorum (Persian stone-cress).